The primary structure comprises 298 residues: tRNA dimethylallyltransferase 2 (298 aa).

ATP is bound at residue 19 to 26; sequence GATATGKT. 21–26 is a substrate binding site; it reads TATGKT. The interval 44–47 is interaction with substrate tRNA; the sequence is DSRQ.

Belongs to the IPP transferase family. As to quaternary structure, monomer. Mg(2+) serves as cofactor.

The enzyme catalyses adenosine(37) in tRNA + dimethylallyl diphosphate = N(6)-dimethylallyladenosine(37) in tRNA + diphosphate. In terms of biological role, catalyzes the transfer of a dimethylallyl group onto the adenine at position 37 in tRNAs that read codons beginning with uridine, leading to the formation of N6-(dimethylallyl)adenosine (i(6)A). This chain is tRNA dimethylallyltransferase 2, found in Treponema denticola (strain ATCC 35405 / DSM 14222 / CIP 103919 / JCM 8153 / KCTC 15104).